Reading from the N-terminus, the 306-residue chain is D-alanine--D-alanine ligase (306 aa).

The ATP-grasp domain maps to 102–300 (KHVAKAAGIP…FGEFLRWMVE (199 aa)). 128-183 (PMKPPYVVKPVREGSSFGVVIVKEDQSHPPQVITSSEWRYGDRVMVERYIAGRELT) contributes to the ATP binding site. Residues Asp-252, Glu-267, and Asn-269 each contribute to the Mg(2+) site.

This sequence belongs to the D-alanine--D-alanine ligase family. It depends on Mg(2+) as a cofactor. Mn(2+) is required as a cofactor.

It is found in the cytoplasm. The enzyme catalyses 2 D-alanine + ATP = D-alanyl-D-alanine + ADP + phosphate + H(+). It functions in the pathway cell wall biogenesis; peptidoglycan biosynthesis. Cell wall formation. This is D-alanine--D-alanine ligase from Sinorhizobium fredii (strain NBRC 101917 / NGR234).